Consider the following 202-residue polypeptide: NAD(P)H dehydrogenase (quinone) (202 aa).

The Flavodoxin-like domain maps to 7-193 (VLVLYYSMYG…TIARFQGRHF (187 aa)). Residues 13–18 (SMYGHI) and 82–84 (TRF) contribute to the FMN site. NAD(+) is bound at residue Y15. W102 is a binding site for substrate. Residues 117-122 (STATGG) and H137 contribute to the FMN site.

It belongs to the WrbA family. Requires FMN as cofactor.

It catalyses the reaction a quinone + NADH + H(+) = a quinol + NAD(+). The catalysed reaction is a quinone + NADPH + H(+) = a quinol + NADP(+). The sequence is that of NAD(P)H dehydrogenase (quinone) from Rhodospirillum rubrum (strain ATCC 11170 / ATH 1.1.1 / DSM 467 / LMG 4362 / NCIMB 8255 / S1).